Reading from the N-terminus, the 184-residue chain is GTP cyclohydrolase 1 (184 aa).

Zn(2+) contacts are provided by Cys75, His78, and Cys146.

This sequence belongs to the GTP cyclohydrolase I family. Toroid-shaped homodecamer, composed of two pentamers of five dimers.

The enzyme catalyses GTP + H2O = 7,8-dihydroneopterin 3'-triphosphate + formate + H(+). The protein operates within cofactor biosynthesis; 7,8-dihydroneopterin triphosphate biosynthesis; 7,8-dihydroneopterin triphosphate from GTP: step 1/1. In Pseudoalteromonas atlantica (strain T6c / ATCC BAA-1087), this protein is GTP cyclohydrolase 1.